We begin with the raw amino-acid sequence, 429 residues long: 26S proteasome regulatory subunit 6A homolog (429 aa).

The segment at 1 to 21 (MSSPPPAAAAAMAVDDADDDQ) is disordered. 217 to 224 (GPPGTGKT) is an ATP binding site.

Belongs to the AAA ATPase family.

It localises to the cytoplasm. The protein resides in the nucleus. Its function is as follows. The 26S proteasome is involved in the ATP-dependent degradation of ubiquitinated proteins. The regulatory (or ATPase) complex confers ATP dependency and substrate specificity to the 26S complex. In Oryza sativa subsp. japonica (Rice), this protein is 26S proteasome regulatory subunit 6A homolog (TBP1).